The sequence spans 179 residues: ATP synthase subunit delta (179 aa).

The protein belongs to the ATPase delta chain family. In terms of assembly, F-type ATPases have 2 components, F(1) - the catalytic core - and F(0) - the membrane proton channel. F(1) has five subunits: alpha(3), beta(3), gamma(1), delta(1), epsilon(1). F(0) has three main subunits: a(1), b(2) and c(10-14). The alpha and beta chains form an alternating ring which encloses part of the gamma chain. F(1) is attached to F(0) by a central stalk formed by the gamma and epsilon chains, while a peripheral stalk is formed by the delta and b chains.

It is found in the cell inner membrane. F(1)F(0) ATP synthase produces ATP from ADP in the presence of a proton or sodium gradient. F-type ATPases consist of two structural domains, F(1) containing the extramembraneous catalytic core and F(0) containing the membrane proton channel, linked together by a central stalk and a peripheral stalk. During catalysis, ATP synthesis in the catalytic domain of F(1) is coupled via a rotary mechanism of the central stalk subunits to proton translocation. Its function is as follows. This protein is part of the stalk that links CF(0) to CF(1). It either transmits conformational changes from CF(0) to CF(1) or is implicated in proton conduction. The protein is ATP synthase subunit delta of Bordetella avium (strain 197N).